Reading from the N-terminus, the 104-residue chain is Iron-sulfur cluster assembly protein CyaY (104 aa).

Belongs to the frataxin family.

Its function is as follows. Involved in iron-sulfur (Fe-S) cluster assembly. May act as a regulator of Fe-S biogenesis. In Aeromonas hydrophila subsp. hydrophila (strain ATCC 7966 / DSM 30187 / BCRC 13018 / CCUG 14551 / JCM 1027 / KCTC 2358 / NCIMB 9240 / NCTC 8049), this protein is Iron-sulfur cluster assembly protein CyaY.